Here is a 651-residue protein sequence, read N- to C-terminus: MPSEVTPKVPERPSRRKTSELFPLSGSESGDIKANSEPPTPAGTPNVPTRRPILKAKTMTSFESGMDQESLPKVPLQRPVRRSTTEELNNVMNNTSKELEEIESLISKHNIHNVSRKKSPTSVEEGKVAAIHQNGQRSASDNKTSTNPSPLEKNEHEGAEGNESAISPSNLVNKSNNEVTEHSDSEDLTEKQKVHAALDNEAGDRSHFEEKLIPGDMKVQVDVSKDVEEGSLNALPPSGITESDDKAEKFTKHPESSLEELQKHQEQQEEKIFQNPTDEESTTSLNEKQEGKDNMEVNSQPQGPSDTETVIAATSSNVPSQIASEEENDVPVIPRSRPKKDFEAHVQKEELPNTQEKRVSEECDSTLISTEEESKIPKIPSERPKRRAPPPVPKKPSSRIAAFQEMLQKQQQQDLHNNGNSSATTASADIAKKHTDSSITSDTTKADFTSKLNGLFALPGMVNPGQLPPSLEKKLSSPDTESKLGPQDQSQAKTGPLGGTRRGRGPRGRKLPSKVASVEKIEEDDNTNKIEIFNNWNVSSSFSKEKVLIDTTPGEQAERALDEKEKLPANAESDPLSQLPQTNTVGNRKAISEESLSPSEAITNRDQNDTTEIQEQQMEEQMEVDMERELSGGYEDVDSALHSEEASFHSL.

A disordered region spans residues 1–85 (MPSEVTPKVP…LQRPVRRSTT (85 aa)). Over residues 9-19 (VPERPSRRKTS) the composition is skewed to basic and acidic residues. Thr-18 carries the post-translational modification Phosphothreonine. Ser-36 is subject to Phosphoserine. Residue Thr-58 is modified to Phosphothreonine. Phosphoserine is present on Ser-70. Thr-85 bears the Phosphothreonine mark. Ser-104 bears the Phosphoserine mark. Residues 110-119 (NIHNVSRKKS) show a composition bias toward basic residues. 2 disordered regions span residues 110–522 (NIHN…EKIE) and 549–651 (IDTT…FHSL). Polar residues-rich tracts occupy residues 133-149 (QNGQRSASDNKTSTNPS) and 164-178 (SAISPSNLVNKSNNE). Residues 179–213 (VTEHSDSEDLTEKQKVHAALDNEAGDRSHFEEKLI) show a composition bias toward basic and acidic residues. 3 positions are modified to phosphoserine: Ser-183, Ser-206, and Ser-231. A compositionally biased stretch (basic and acidic residues) spans 243–272 (SDDKAEKFTKHPESSLEELQKHQEQQEEKI). Thr-277 is modified (phosphothreonine). Ser-284 is modified (phosphoserine). A compositionally biased stretch (polar residues) spans 296–323 (EVNSQPQGPSDTETVIAATSSNVPSQIA). A Phosphoserine modification is found at Ser-324. 2 stretches are compositionally biased toward basic and acidic residues: residues 339–361 (KKDFEAHVQKEELPNTQEKRVSE) and 372–383 (EESKIPKIPSER). The interval 383-396 (RPKRRAPPPVPKKP) is interaction with SH3 domain of ABP1. Polar residues-rich tracts occupy residues 414-427 (DLHNNGNSSATTAS) and 437-452 (SSITSDTTKADFTSKL). Basic and acidic residues predominate over residues 471–482 (LEKKLSSPDTES). Positions 501–512 (RRGRGPRGRKLP) are enriched in basic residues. Position 552 is a phosphothreonine (Thr-552). Over residues 556–567 (QAERALDEKEKL) the composition is skewed to basic and acidic residues. The segment covering 575–586 (PLSQLPQTNTVG) has biased composition (polar residues). Phosphoserine occurs at positions 592, 595, 597, 599, 639, 643, 647, and 650. The segment covering 594–605 (ESLSPSEAITNR) has biased composition (polar residues). Residues 639–651 (SALHSEEASFHSL) show a composition bias toward basic and acidic residues.

Belongs to the AIM21 family. As to quaternary structure, interacts with ribosomes. Interacts with ABP1.

It is found in the cytoplasm. Its subcellular location is the cytoskeleton. The protein resides in the actin patch. Involved in mitochondrial migration along actin filaments. The polypeptide is Altered inheritance of mitochondria protein 21 (AIM21) (Saccharomyces cerevisiae (strain RM11-1a) (Baker's yeast)).